Consider the following 159-residue polypeptide: ATP synthase subunit b (159 aa).

Residues 4-24 (VGINGTLIVQLVTFVILVALL) traverse the membrane as a helical segment.

It belongs to the ATPase B chain family. F-type ATPases have 2 components, F(1) - the catalytic core - and F(0) - the membrane proton channel. F(1) has five subunits: alpha(3), beta(3), gamma(1), delta(1), epsilon(1). F(0) has three main subunits: a(1), b(2) and c(10-14). The alpha and beta chains form an alternating ring which encloses part of the gamma chain. F(1) is attached to F(0) by a central stalk formed by the gamma and epsilon chains, while a peripheral stalk is formed by the delta and b chains.

The protein resides in the cell inner membrane. Its function is as follows. F(1)F(0) ATP synthase produces ATP from ADP in the presence of a proton or sodium gradient. F-type ATPases consist of two structural domains, F(1) containing the extramembraneous catalytic core and F(0) containing the membrane proton channel, linked together by a central stalk and a peripheral stalk. During catalysis, ATP synthesis in the catalytic domain of F(1) is coupled via a rotary mechanism of the central stalk subunits to proton translocation. In terms of biological role, component of the F(0) channel, it forms part of the peripheral stalk, linking F(1) to F(0). This Acidithiobacillus ferridurans protein is ATP synthase subunit b.